We begin with the raw amino-acid sequence, 439 residues long: Histone acetyltransferase GCN5 (439 aa).

2 stretches are compositionally biased toward basic and acidic residues: residues 1-28 (MVTK…KLEN) and 39-59 (ETNK…KETE). Positions 1 to 59 (MVTKHQIEEDHLDGATTDPEVKRVKLENNVEEIQPEQAETNKQEGTDKENKGKFEKETE) are disordered. The 156-residue stretch at 100-255 (IEFRVVNNDN…GGTLMQCSML (156 aa)) folds into the N-acetyltransferase domain. Glutamate 173 serves as the catalytic Proton donor/acceptor. Acetyl-CoA is bound by residues 177–179 (CAI), 184–190 (QVRGYGA), and 216–219 (YAIG). A Bromo domain is found at 327–431 (PKRGPHDAAI…KFFNNKVKEI (105 aa)).

This sequence belongs to the acetyltransferase family. GCN5 subfamily. As to quaternary structure, component of the 1.8 MDa SAGA (Spt-Ada-Gcn5 acetyltransferase) complex, which is composed of 19 subunits TRA1, SPT7, TAF5, NGG1/ADA3, SGF73, SPT20/ADA5, SPT8, TAF12, TAF6, HFI1/ADA1, UBP8, GCN5, ADA2, SPT3, SGF29, TAF10, TAF9, SGF11 and SUS1. The SAGA complex is composed of 4 modules, namely the HAT (histone acetyltransferase) module (GCN5, ADA2, NGG1/ADA3 and SGF29), the DUB (deubiquitinating) module (UBP8, SGF11, SGF73 and SUS1), the core or TAF (TBP-associated factor) module (TAF5, TAF6, TAF9, TAF10 and TAF12), and the Tra1 or SPT (Suppressor of Ty) module (TRA1, HFI1/ADA1, SPT3, SPT7, SPT8 and SPT20/ADA5). The Tra1/SPT module binds activators, the core module recruits TBP (TATA-binding protein), the HAT module contains the histone H3 acetyltransferase GCN5, and the DUB module comprises the histone H2B deubiquitinase UBP8. Also identified in an altered form of SAGA, named SALSA (SAGA altered, Spt8 absent) or SLIK (SAGA-like) complex, which contains a C-terminal truncated form of SPT7 and is missing SPT8. However, it has been shown that the SAGA and SAGA-like SALSA/SLIK transcriptional coactivators are structurally and biochemically equivalent. Component of the 0.8 MDa ADA complex, a HAT complex distinct from SAGA, which at least consists of ADA2, NGG1/ADA3, AHC1, AHC2, SGF29 and GCN5. Component of an ADA/GCN5 complex that consists of HFI1/ADA1, ADA2, NGG1/ADA3, SPT20/ADA5 and GCN5 and probably is a subcomplex of SAGA.

It is found in the nucleus. The protein localises to the cytoplasm. It catalyses the reaction L-lysyl-[protein] + acetyl-CoA = N(6)-acetyl-L-lysyl-[protein] + CoA + H(+). The enzyme catalyses (2E)-butenoyl-CoA + L-lysyl-[protein] = N(6)-(2E)-butenoyl-L-lysyl-[protein] + CoA + H(+). Functionally, histone acetyltransferase that acetylates histone H2B to form H2BK11ac and H2BK16ac, histone H3 to form H3K9ac, H3K14ac, H3K18ac, H3K23ac, H3K27ac and H3K36ac, with a lower preference histone H4 to form H4K8ac and H4K16ac, and contributes to H2A.Z acetylation. Acetylation of histones gives a specific tag for epigenetic transcription activation and elongation. Operates in concert with certain DNA-binding transcriptional activators such as GCN4 or HAP2/3/4. Its acetyltransferase activity seems to be dependent on the association in different multisubunit complexes. Component of the transcription coactivator SAGA complex. SAGA acts as a general cofactor required for essentially all RNA polymerase II transcription. At the promoters, SAGA is required for transcription pre-initiation complex (PIC) recruitment. It influences RNA polymerase II transcriptional activity through different activities such as TBP interaction (via core/TAF module) and promoter selectivity, interaction with transcription activators (via Tra1/SPT module), and chromatin modification through histone acetylation (via HAT module) and deubiquitination (via DUB module). SAGA preferentially acetylates histones H3 (to form H3K9ac, H3K14ac, H3K18ac and H3K23ac) and H2B and deubiquitinates histone H2B. SAGA interacts with DNA via upstream activating sequences (UASs). Also identified in a modified version of SAGA named SALSA or SLIK. The cleavage of SPT7 and the absence of the SPT8 subunit in SLIK neither drive any major conformational differences in its structure compared with SAGA, nor significantly affect HAT, DUB, or DNA-binding activities. Component of the ADA histone acetyltransferase complex, which preferentially acetylates nucleosomal histones H3 (to form H3K14ac and H3K18ac) and H2B. In addition to histone acetyltransferase, can use different acyl-CoA substrates, such as (2E)-butenoyl-CoA (crotonyl-CoA) and is able to mediate histone crotonylation. Controls the metaphase-to-anaphase transition and is required for correct chromosome segregation and centromere/kinetochore function in mitosis. May be involved in response to DNA damage by genotoxic agents. This Saccharomyces cerevisiae (strain ATCC 204508 / S288c) (Baker's yeast) protein is Histone acetyltransferase GCN5.